We begin with the raw amino-acid sequence, 425 residues long: Serine--tRNA ligase (425 aa).

228-230 (TAE) contributes to the L-serine binding site. 259 to 261 (RSE) is an ATP binding site. Residue E282 coordinates L-serine. 346–349 (EIAS) is a binding site for ATP. S382 provides a ligand contact to L-serine.

It belongs to the class-II aminoacyl-tRNA synthetase family. Type-1 seryl-tRNA synthetase subfamily. In terms of assembly, homodimer. The tRNA molecule binds across the dimer.

It is found in the cytoplasm. The catalysed reaction is tRNA(Ser) + L-serine + ATP = L-seryl-tRNA(Ser) + AMP + diphosphate + H(+). The enzyme catalyses tRNA(Sec) + L-serine + ATP = L-seryl-tRNA(Sec) + AMP + diphosphate + H(+). Its pathway is aminoacyl-tRNA biosynthesis; selenocysteinyl-tRNA(Sec) biosynthesis; L-seryl-tRNA(Sec) from L-serine and tRNA(Sec): step 1/1. Catalyzes the attachment of serine to tRNA(Ser). Is also able to aminoacylate tRNA(Sec) with serine, to form the misacylated tRNA L-seryl-tRNA(Sec), which will be further converted into selenocysteinyl-tRNA(Sec). This chain is Serine--tRNA ligase, found in Rickettsia canadensis (strain McKiel).